Here is a 339-residue protein sequence, read N- to C-terminus: mRNA cap guanine-N(7) methyltransferase 2 (339 aa).

One can recognise an mRNA cap 0 methyltransferase domain in the interval 1 to 277 (MAVTPHHRLY…LYSTFVFQKP (277 aa)). Residues lysine 14, aspartate 54, and 82–83 (DP) contribute to the S-adenosyl-L-methionine site. Positions 314–339 (VSRTDILPPADNEKGILGPGPADMRL) are disordered.

Belongs to the class I-like SAM-binding methyltransferase superfamily. mRNA cap 0 methyltransferase family.

Its subcellular location is the nucleus. The catalysed reaction is a 5'-end (5'-triphosphoguanosine)-ribonucleoside in mRNA + S-adenosyl-L-methionine = a 5'-end (N(7)-methyl 5'-triphosphoguanosine)-ribonucleoside in mRNA + S-adenosyl-L-homocysteine. In terms of biological role, mRNA-capping methyltransferase that methylates the N7 position of the added guanosine to the 5'-cap structure of mRNAs. Binds RNA containing 5'-terminal GpppC. The polypeptide is mRNA cap guanine-N(7) methyltransferase 2 (Oryza sativa subsp. japonica (Rice)).